Reading from the N-terminus, the 407-residue chain is Argininosuccinate synthase (407 aa).

ATP-binding positions include 11 to 19 and alanine 39; that span reads AYSGGLDTS. Positions 90 and 95 each coordinate L-citrulline. Residue glycine 120 coordinates ATP. Residues threonine 122, asparagine 126, and aspartate 127 each contribute to the L-aspartate site. Asparagine 126 lines the L-citrulline pocket. The L-citrulline site is built by arginine 130, serine 179, serine 188, glutamate 264, and tyrosine 276.

This sequence belongs to the argininosuccinate synthase family. Type 1 subfamily. As to quaternary structure, homotetramer.

The protein resides in the cytoplasm. It carries out the reaction L-citrulline + L-aspartate + ATP = 2-(N(omega)-L-arginino)succinate + AMP + diphosphate + H(+). It participates in amino-acid biosynthesis; L-arginine biosynthesis; L-arginine from L-ornithine and carbamoyl phosphate: step 2/3. This is Argininosuccinate synthase from Roseiflexus sp. (strain RS-1).